We begin with the raw amino-acid sequence, 588 residues long: Pescadillo homolog (588 aa).

A required for 28S ribosomal RNA processing region spans residues 1-54 (MGGLEKKKYERGSATNYITRNKARKKLQLSLADFRRLCILKGIYPHEPKHKKKV). The interval 1–257 (MGGLEKKKYE…PKLEGQAQAE (257 aa)) is sufficient for nucleolar localization. Residue Lys-98 is modified to N6-acetyllysine. A disordered region spans residues 294–314 (EAEVDEFPTDGEMSAQEEDRR). The interval 306–415 (MSAQEEDRRK…LLLPVAEYFS (110 aa)) is sufficient for interaction with MAP1B. The 94-residue stretch at 322 to 415 (KHKKLFEGLK…LLLPVAEYFS (94 aa)) folds into the BRCT domain. Positions 448-515 (GEDPGNLNES…GKKPRVMAGT (68 aa)) are disordered. Over residues 456–486 (ESEEEEEEDDNNEGDGDEEGENEEEEEDAEA) the composition is skewed to acidic residues. A compositionally biased stretch (basic and acidic residues) spans 487–508 (GSEKEEEARLAALEEQRMEGKK). A Glycyl lysine isopeptide (Lys-Gly) (interchain with G-Cter in SUMO1); alternate cross-link involves residue Lys-517. Residue Lys-517 forms a Glycyl lysine isopeptide (Lys-Gly) (interchain with G-Cter in SUMO2); alternate linkage. The tract at residues 539-588 (MMKKREKYLYQKIMFGKRRKIREANKLAEKRKAHDEAVRSEKKAKKARPE) is required for 28S ribosomal RNA processing. The interval 565 to 588 (LAEKRKAHDEAVRSEKKAKKARPE) is disordered.

It belongs to the pescadillo family. Component of the PeBoW complex, composed of BOP1, PES1 and WDR12. The complex is held together by BOP1, which interacts with PES1 via its N-terminal domain and with WDR12 via a high-affinity interaction between the seven-bladed beta-propeller domains of the 2 proteins. The PeBoW complex associates with the 66S pre-ribosome. The PeBoW complex also associates with DDX27, PES1 interacts directly with DDX27. Interacts with IRS1 and UBTF. May interact with MAP1B. Post-translationally, sumoylated. In terms of tissue distribution, significant levels are detected in a variety of cancer cell lines, including glioblastoma, breast carcinoma, colon carcinoma and cervical carcinoma cells. Levels are abnormally elevated in malignant tumors of astrocytic origin.

The protein resides in the nucleus. Its subcellular location is the nucleolus. It is found in the nucleoplasm. It localises to the chromosome. In terms of biological role, component of the PeBoW complex, which is required for maturation of 28S and 5.8S ribosomal RNAs and formation of the 60S ribosome. The chain is Pescadillo homolog from Homo sapiens (Human).